A 280-amino-acid chain; its full sequence is Golgi to ER traffic protein 2 (280 aa).

Composition is skewed to basic and acidic residues over residues 1–17, 44–62, and 71–80; these read MSLS…ERRQ, SALD…EAVK, and AKKESTAQAK. The interval 1–80 is disordered; sequence MSLSEAEKRK…AKKESTAQAK (80 aa). Topologically, residues 1–146 are cytoplasmic; that stretch reads MSLSEAEKRK…VEYHKYRVNT (146 aa). A helical membrane pass occupies residues 147–166; sequence LTAKTTLVKWIVLLAYIFLL. Residues 167-191 are Lumenal-facing; the sequence is TRTDDTYFPFVVRSYLPEVFTSQSS. A helical membrane pass occupies residues 192–211; it reads FFSIFLTFEILATSIYYQLS. Residues 212 to 258 lie on the Cytoplasmic side of the membrane; it reads VGVERETGVKTLQDTSKIVSLVSMVPEGILPIADLRGKVILAMKYWN. The chain crosses the membrane as a helical span at residues 259–279; it reads IIAMMIGDVCFVLVAIGLVSQ. Position 280 (Ile280) is a topological domain, lumenal.

This sequence belongs to the GET2 family. Component of the Golgi to ER traffic (GET) complex, which is composed of GET1, GET2 and GET3. Within the complex, GET1 and GET2 form a heterotetramer which is stabilized by phosphatidylinositol binding and which binds to the GET3 homodimer.

Its subcellular location is the endoplasmic reticulum membrane. It is found in the golgi apparatus membrane. Its function is as follows. Required for the post-translational delivery of tail-anchored (TA) proteins to the endoplasmic reticulum. Together with GET1, acts as a membrane receptor for soluble GET3, which recognizes and selectively binds the transmembrane domain of TA proteins in the cytosol. The GET complex cooperates with the HDEL receptor ERD2 to mediate the ATP-dependent retrieval of resident ER proteins that contain a C-terminal H-D-E-L retention signal from the Golgi to the ER. The polypeptide is Golgi to ER traffic protein 2 (Candida glabrata (strain ATCC 2001 / BCRC 20586 / JCM 3761 / NBRC 0622 / NRRL Y-65 / CBS 138) (Yeast)).